Consider the following 314-residue polypeptide: Dioxygenase easH (314 aa).

Residues H141, D143, and H217 each coordinate Fe cation.

This sequence belongs to the PhyH family. In terms of assembly, homodimer. Requires Fe cation as cofactor.

It functions in the pathway alkaloid biosynthesis; ergot alkaloid biosynthesis. Functionally, dioxygenase; part of the gene cluster that mediates the biosynthesis of fungal ergot alkaloid. DmaW catalyzes the first step of ergot alkaloid biosynthesis by condensing dimethylallyl diphosphate (DMAP) and tryptophan to form 4-dimethylallyl-L-tryptophan. The second step is catalyzed by the methyltransferase easF that methylates 4-dimethylallyl-L-tryptophan in the presence of S-adenosyl-L-methionine, resulting in the formation of 4-dimethylallyl-L-abrine. The catalase easC and the FAD-dependent oxidoreductase easE then transform 4-dimethylallyl-L-abrine to chanoclavine-I which is further oxidized by easD in the presence of NAD(+), resulting in the formation of chanoclavine-I aldehyde. Agroclavine dehydrogenase easG then mediates the conversion of chanoclavine-I aldehyde to agroclavine via a non-enzymatic adduct reaction: the substrate is an iminium intermediate that is formed spontaneously from chanoclavine-I aldehyde in the presence of glutathione. The presence of easA is not required to complete this reaction. Further conversion of agroclavine to paspalic acid is a two-step process involving oxidation of agroclavine to elymoclavine and of elymoclavine to paspalic acid, the second step being performed by the elymoclavine oxidase cloA. Paspalic acid is then further converted to D-lysergic acid. Ergopeptines are assembled from D-lysergic acid and three different amino acids by the D-lysergyl-peptide-synthetases composed each of a monomudular and a trimodular nonribosomal peptide synthetase subunit. LpsB and lpsC encode the monomodular subunits responsible for D-lysergic acid activation and incorporation into the ergopeptine backbone. LpsA1 and A2 subunits encode the trimodular nonribosomal peptide synthetase assembling the tripeptide portion of ergopeptines. LpsA1 is responsible for formation of the major ergopeptine, ergotamine, and lpsA2 for alpha-ergocryptine, the minor ergopeptine of the total alkaloid mixture elaborated by C.purpurea. D-lysergyl-tripeptides are assembled by the nonribosomal peptide synthetases and released as N-(D-lysergyl-aminoacyl)-lactams. Cyclolization of the D-lysergyl-tripeptides is performed by the Fe(2+)/2-ketoglutarate-dependent dioxygenase easH which introduces a hydroxyl group into N-(D-lysergyl-aminoacyl)-lactam at alpha-C of the aminoacyl residue followed by spontaneous condensation with the terminal lactam carbonyl group. In Claviceps purpurea (strain 20.1) (Ergot fungus), this protein is Dioxygenase easH.